The following is a 213-amino-acid chain: Probable transaldolase (213 aa).

The Schiff-base intermediate with substrate role is filled by Lys-83.

The protein belongs to the transaldolase family. Type 3B subfamily.

The protein localises to the cytoplasm. It catalyses the reaction D-sedoheptulose 7-phosphate + D-glyceraldehyde 3-phosphate = D-erythrose 4-phosphate + beta-D-fructose 6-phosphate. It functions in the pathway carbohydrate degradation; pentose phosphate pathway; D-glyceraldehyde 3-phosphate and beta-D-fructose 6-phosphate from D-ribose 5-phosphate and D-xylulose 5-phosphate (non-oxidative stage): step 2/3. Transaldolase is important for the balance of metabolites in the pentose-phosphate pathway. The polypeptide is Probable transaldolase (Syntrophomonas wolfei subsp. wolfei (strain DSM 2245B / Goettingen)).